A 170-amino-acid chain; its full sequence is NADH-quinone oxidoreductase subunit B (170 aa).

[4Fe-4S] cluster-binding residues include Cys-42, Cys-43, Cys-107, and Cys-136.

This sequence belongs to the complex I 20 kDa subunit family. As to quaternary structure, NDH-1 is composed of 14 different subunits. Subunits NuoB, C, D, E, F, and G constitute the peripheral sector of the complex. It depends on [4Fe-4S] cluster as a cofactor.

The protein resides in the cell inner membrane. The catalysed reaction is a quinone + NADH + 5 H(+)(in) = a quinol + NAD(+) + 4 H(+)(out). In terms of biological role, NDH-1 shuttles electrons from NADH, via FMN and iron-sulfur (Fe-S) centers, to quinones in the respiratory chain. The immediate electron acceptor for the enzyme in this species is believed to be ubiquinone. Couples the redox reaction to proton translocation (for every two electrons transferred, four hydrogen ions are translocated across the cytoplasmic membrane), and thus conserves the redox energy in a proton gradient. The protein is NADH-quinone oxidoreductase subunit B of Campylobacter curvus (strain 525.92).